Reading from the N-terminus, the 291-residue chain is ATP synthase subunit b 2 (291 aa).

Residues Leu-2 to Leu-22 form a helical membrane-spanning segment.

The protein belongs to the ATPase B chain family. F-type ATPases have 2 components, F(1) - the catalytic core - and F(0) - the membrane proton channel. F(1) has five subunits: alpha(3), beta(3), gamma(1), delta(1), epsilon(1). F(0) has three main subunits: a(1), b(2) and c(10-14). The alpha and beta chains form an alternating ring which encloses part of the gamma chain. F(1) is attached to F(0) by a central stalk formed by the gamma and epsilon chains, while a peripheral stalk is formed by the delta and b chains.

It is found in the cell inner membrane. Its function is as follows. F(1)F(0) ATP synthase produces ATP from ADP in the presence of a proton or sodium gradient. F-type ATPases consist of two structural domains, F(1) containing the extramembraneous catalytic core and F(0) containing the membrane proton channel, linked together by a central stalk and a peripheral stalk. During catalysis, ATP synthesis in the catalytic domain of F(1) is coupled via a rotary mechanism of the central stalk subunits to proton translocation. Functionally, component of the F(0) channel, it forms part of the peripheral stalk, linking F(1) to F(0). The protein is ATP synthase subunit b 2 of Nitrosospira multiformis (strain ATCC 25196 / NCIMB 11849 / C 71).